Consider the following 166-residue polypeptide: Phosphopantetheine adenylyltransferase (166 aa).

Substrate is bound at residue serine 11. ATP is bound by residues 11 to 12 (SF) and histidine 19. Lysine 43, valine 80, and arginine 94 together coordinate substrate. ATP-binding positions include 95–97 (GLR), glutamate 105, and 130–136 (VRTITAT).

Belongs to the bacterial CoaD family. In terms of assembly, homohexamer. Mg(2+) is required as a cofactor.

Its subcellular location is the cytoplasm. It catalyses the reaction (R)-4'-phosphopantetheine + ATP + H(+) = 3'-dephospho-CoA + diphosphate. The protein operates within cofactor biosynthesis; coenzyme A biosynthesis; CoA from (R)-pantothenate: step 4/5. Reversibly transfers an adenylyl group from ATP to 4'-phosphopantetheine, yielding dephospho-CoA (dPCoA) and pyrophosphate. The sequence is that of Phosphopantetheine adenylyltransferase from Mesorhizobium japonicum (strain LMG 29417 / CECT 9101 / MAFF 303099) (Mesorhizobium loti (strain MAFF 303099)).